We begin with the raw amino-acid sequence, 391 residues long: Sulfate adenylyltransferase (391 aa).

Belongs to the sulfate adenylyltransferase family.

The enzyme catalyses sulfate + ATP + H(+) = adenosine 5'-phosphosulfate + diphosphate. The protein operates within sulfur metabolism; hydrogen sulfide biosynthesis; sulfite from sulfate: step 1/3. This Lactiplantibacillus plantarum (strain ATCC BAA-793 / NCIMB 8826 / WCFS1) (Lactobacillus plantarum) protein is Sulfate adenylyltransferase.